Reading from the N-terminus, the 436-residue chain is Serine--tRNA ligase (436 aa).

239–241 (TAE) contacts L-serine. Residue 270–272 (RLE) participates in ATP binding. An L-serine-binding site is contributed by Glu-293. 357-360 (EISS) contacts ATP. L-serine is bound at residue Ser-393.

This sequence belongs to the class-II aminoacyl-tRNA synthetase family. Type-1 seryl-tRNA synthetase subfamily. As to quaternary structure, homodimer. The tRNA molecule binds across the dimer.

The protein resides in the cytoplasm. The catalysed reaction is tRNA(Ser) + L-serine + ATP = L-seryl-tRNA(Ser) + AMP + diphosphate + H(+). The enzyme catalyses tRNA(Sec) + L-serine + ATP = L-seryl-tRNA(Sec) + AMP + diphosphate + H(+). It participates in aminoacyl-tRNA biosynthesis; selenocysteinyl-tRNA(Sec) biosynthesis; L-seryl-tRNA(Sec) from L-serine and tRNA(Sec): step 1/1. Catalyzes the attachment of serine to tRNA(Ser). Is also able to aminoacylate tRNA(Sec) with serine, to form the misacylated tRNA L-seryl-tRNA(Sec), which will be further converted into selenocysteinyl-tRNA(Sec). The sequence is that of Serine--tRNA ligase from Blochmanniella floridana.